The sequence spans 129 residues: Small ribosomal subunit protein uS11 (129 aa).

The protein belongs to the universal ribosomal protein uS11 family. Part of the 30S ribosomal subunit. Interacts with proteins S7 and S18. Binds to IF-3.

Its function is as follows. Located on the platform of the 30S subunit, it bridges several disparate RNA helices of the 16S rRNA. Forms part of the Shine-Dalgarno cleft in the 70S ribosome. The protein is Small ribosomal subunit protein uS11 of Pseudomonas fluorescens (strain ATCC BAA-477 / NRRL B-23932 / Pf-5).